We begin with the raw amino-acid sequence, 492 residues long: MALLWGLLALILSCLSSLCSAQFSPVSTMEPLDLQLMDGQAQQKLPPLSLLKLDNQEPGGQIAPKKAPEDCKLSPTPEQTRRLARAMMTFTTDLFSLVAQSSTRPNLILSPLSVALALSHLALGAQNQTLQRLKEVLHADSGPCLPHLLSRLCQDLGPGAFRLAARMYLQKGFPIKEDFLEQSEQLFGAKPMSLTGMKGEDLANINRWVKEATEGKIEDFLSDLPDDTVLLLLNAIHFQGFWRSKFDPNLTQRGAFHLDEQFTVPVDMMQALTYPLHWFLLEQPEIQVAHFPFKNNMSFVVLMPTRFEWNASQVLANLTWDILHQPSLSERPTKVQLPKLHLKYQLDLVATLSQLGLQELFQAPDLRGISDERLVVSSVQHQSALELSEAGVQAAAATSTAMSRMSLSSFIVNRPFLFFILEDSTSLPLFVGSVRNPNPGAQPERKEQQDSPDGKDSFQDHKGLPRGDKPFDPDLKLGPPSEEDYAQPSSPK.

The N-terminal stretch at 1–22 (MALLWGLLALILSCLSSLCSAQ) is a signal peptide. Residues 23 to 40 (FSPVSTMEPLDLQLMDGQ) constitute a propeptide that is removed on maturation. Residues 56-76 (QEPGGQIAPKKAPEDCKLSPT) form a disordered region. The cysteines at positions 71 and 144 are disulfide-linked. N-linked (GlcNAc...) asparagine glycans are attached at residues Asn-127, Asn-249, Asn-296, Asn-310, and Asn-317. Positions 433-492 (SVRNPNPGAQPERKEQQDSPDGKDSFQDHKGLPRGDKPFDPDLKLGPPSEEDYAQPSSPK) are disordered. The segment covering 443 to 475 (PERKEQQDSPDGKDSFQDHKGLPRGDKPFDPDL) has biased composition (basic and acidic residues). At Tyr-485 the chain carries Sulfotyrosine.

Belongs to the serpin family. Forms protease inhibiting heterodimer with TMPRSS7. Proteolytically cleaved at Pro-31 by both the prolyl endopeptidase FAP form and antiplasmin-cleaving enzyme FAP soluble form to generate mature alpha-2-antiplasmin. Expressed by the liver and secreted in plasma.

The protein resides in the secreted. In terms of biological role, serine protease inhibitor. The major targets of this inhibitor are plasmin and trypsin, but it also inactivates matriptase-3/TMPRSS7 and chymotrypsin. In Bos taurus (Bovine), this protein is Alpha-2-antiplasmin (SERPINF2).